The sequence spans 125 residues: Synaptobrevin (125 aa).

Residues 1 to 46 are disordered; it reads MSGPQNPQAGPGGPPSGPPQPGGPPGPPQGPPQPVQQSKRLQQTQA. Residues 1–103 lie on the Cytoplasmic side of the membrane; the sequence is MSGPQNPQAG…KRKFWWKNCK (103 aa). The segment covering 12 to 34 has biased composition (pro residues); the sequence is GGPPSGPPQPGGPPGPPQGPPQP. Positions 40 to 100 constitute a v-SNARE coiled-coil homology domain; the sequence is RLQQTQAQVE…GKLKRKFWWK (61 aa). Residues 104-123 traverse the membrane as a helical; Anchor for type IV membrane protein segment; sequence MMIILGGIVAVIVTVIIVWA. Over 124-125 the chain is Vesicular; it reads AT.

Belongs to the synaptobrevin family.

It localises to the cytoplasmic vesicle. The protein localises to the secretory vesicle. Its subcellular location is the synaptic vesicle membrane. The protein resides in the synapse. It is found in the synaptosome. In terms of biological role, intrinsic membrane protein of small synaptic vesicles. The polypeptide is Synaptobrevin (Doryteuthis pealeii (Longfin inshore squid)).